Consider the following 687-residue polypeptide: Pre-mRNA-splicing factor CLF1 (687 aa).

13 HAT repeats span residues 45-77 (EYQRRKRTEYEGYLKRNRLDMGQWIRYAQFEIE), 79-111 (HDMRRARSIFERALLVDSSFIPLWIRYIDAELK), 113-145 (KCINHARNLMNRAISTLPRVDKLWYKYLIVEES), 147-178 (NNVEIVRSLYTKWCSLEPGVNAWNSFVDFEIR), 180-211 (KNWNGVREIYSKYVMAHPQMQTWLKWVRFENR), 213-247 (GNTEFTRSVYSLAIDTVANLQNLQIWSDMEVAKLV), 251-283 (AHWEAAQQEYERSSALYQIAIEKWPSNQLLKAG), 300-332 (TISYKRKMEYETILSNNAYDYDTWWLYLDLISE), 337-369 (QIMQTFEKAIVDSRPKELSKNVQWKRYIYLWMR), 383-416 (LEEELFQRLIDDIIPHKHFTFSKIWLMYAKFLIR), 451-483 (KEFDRVRKIYEKFIEFQPSDLQIWSQYGELEEN), 525-557 (QEFEKARKLYRRYLELNQYSPQSWIEFAMYQTS), and 629-661 (LDQETVKKRFPKVIKKVRLQNGVEEEFVDYIFP).

The protein belongs to the crooked-neck family. In terms of assembly, belongs to the NTC complex (or PRP19-associated complex), composed of at least CEF1, CLF1, ISY1, NTC20, SNT309, SYF1, SYF2, and PRP19. The NTC complex associates with the spliceosome after the release of the U1 and U4 snRNAs and forms the CWC spliceosome subcomplex (or CEF1-associated complex) reminiscent of a late-stage spliceosome composed also of the U2, U5 and U6 snRNAs and at least BUD13, BUD31, BRR2, CDC40, CUS1, CWC2, CWC15, CWC21, CWC22, CWC23, CWC24, CWC25, CWC27, ECM2, HSH155, IST3, LEA1, MSL1, PRP8, PRP9, PRP11, PRP21, PRP22, PRP45, PRP46, SLU7, SMB1, SMD1, SMD2, SMD3, SMX2, SMX3, SNU114, SPP2, RSE1 and YJU2. Interacts with CEF1, ISY1, MUD2, NTC20, PRP22, PRP40, PRP46, SYF1, SYF2, and the ORC2 subunit of the origin recognition complex.

The protein localises to the nucleus. Involved in pre-mRNA splicing and cell cycle progression. Required for the spliceosome assembly by promoting the functional integration of the U4/U6.U5 tri-snRNP particle into the U1-, U2-dependent pre-spliceosome. Also recruits PRP19 to the spliceosome, as a component of the NTC complex (or PRP19-associated complex). The association of the NTC complex to the spliceosome mediates conformational rearrangement or stabilizes the structure of the spliceosome after U4 snRNA dissociation, which leads to spliceosome maturation. Required for initiation of the DNA replication by binding the RNA replication origins, probably through its interaction with the origin recognition complex (ORC). In Saccharomyces cerevisiae (strain ATCC 204508 / S288c) (Baker's yeast), this protein is Pre-mRNA-splicing factor CLF1 (CLF1).